Here is a 657-residue protein sequence, read N- to C-terminus: Trifunctional protein RibF/MnmA (657 aa).

The FMN adenylyltransferase stretch occupies residues 1-141 (MLSIINLTSK…VVKKDHCSTS (141 aa)). Positions 158 to 282 (LLLTPFYLKG…DKKAALSFFH (125 aa)) are riboflavin kinase. The segment at 283 to 657 (KQEKPKVVVA…GGGKITKIIK (375 aa)) is tRNA-specific 2-thiouridylase MnmA. Residues 292-299 (ALSGGVDS) and M318 each bind ATP. An interaction with target base in tRNA region spans residues 389-391 (NPD). C394 serves as the catalytic Nucleophile. Cysteines 394 and 492 form a disulfide. ATP is bound at residue G420. Residues 442–444 (KDQ) are interaction with tRNA. Catalysis depends on C492, which acts as the Cysteine persulfide intermediate.

In the N-terminal section; belongs to the RibF family. The protein in the C-terminal section; belongs to the MnmA/TRMU family.

The protein localises to the cytoplasm. The catalysed reaction is riboflavin + ATP = FMN + ADP + H(+). The enzyme catalyses FMN + ATP + H(+) = FAD + diphosphate. It catalyses the reaction S-sulfanyl-L-cysteinyl-[protein] + uridine(34) in tRNA + AH2 + ATP = 2-thiouridine(34) in tRNA + L-cysteinyl-[protein] + A + AMP + diphosphate + H(+). Its pathway is cofactor biosynthesis; FAD biosynthesis; FAD from FMN: step 1/1. It functions in the pathway cofactor biosynthesis; FMN biosynthesis; FMN from riboflavin (ATP route): step 1/1. Functionally, involved in FAD and FMN biosynthesis. Its function is as follows. Catalyzes the 2-thiolation of uridine at the wobble position (U34) of tRNA, leading to the formation of s(2)U34. The polypeptide is Trifunctional protein RibF/MnmA (ribF/mnmA) (Mycoplasmoides gallisepticum (strain R(low / passage 15 / clone 2)) (Mycoplasma gallisepticum)).